The following is a 184-amino-acid chain: Peptide deformylase (184 aa).

Residues C92 and H134 each coordinate Fe cation. E135 is a catalytic residue. Residue H138 participates in Fe cation binding.

The protein belongs to the polypeptide deformylase family. Requires Fe(2+) as cofactor.

The catalysed reaction is N-terminal N-formyl-L-methionyl-[peptide] + H2O = N-terminal L-methionyl-[peptide] + formate. Its function is as follows. Removes the formyl group from the N-terminal Met of newly synthesized proteins. Requires at least a dipeptide for an efficient rate of reaction. N-terminal L-methionine is a prerequisite for activity but the enzyme has broad specificity at other positions. The chain is Peptide deformylase from Psychrobacter cryohalolentis (strain ATCC BAA-1226 / DSM 17306 / VKM B-2378 / K5).